The chain runs to 349 residues: Isopentenyl-diphosphate delta-isomerase (349 aa).

6-7 (RK) is a substrate binding site. FMN is bound by residues 62 to 64 (AMT), serine 93, and asparagine 122. Position 152 (glutamine 152) interacts with substrate. A Mg(2+)-binding site is contributed by glutamate 153. FMN-binding positions include lysine 184, threonine 214, 258–259 (GG), and 280–281 (AG).

Belongs to the IPP isomerase type 2 family. In terms of assembly, homooctamer. Dimer of tetramers. Requires FMN as cofactor. NADPH serves as cofactor. The cofactor is Mg(2+).

It localises to the cytoplasm. The catalysed reaction is isopentenyl diphosphate = dimethylallyl diphosphate. Its function is as follows. Involved in the biosynthesis of isoprenoids. Catalyzes the 1,3-allylic rearrangement of the homoallylic substrate isopentenyl (IPP) to its allylic isomer, dimethylallyl diphosphate (DMAPP). The protein is Isopentenyl-diphosphate delta-isomerase of Bacillus licheniformis (strain ATCC 14580 / DSM 13 / JCM 2505 / CCUG 7422 / NBRC 12200 / NCIMB 9375 / NCTC 10341 / NRRL NRS-1264 / Gibson 46).